The primary structure comprises 489 residues: Betaine aldehyde dehydrogenase (489 aa).

K(+) contacts are provided by threonine 26 and aspartate 93. 150-152 (GAW) provides a ligand contact to NAD(+). The active-site Charge relay system is lysine 162. 176 to 179 (KPSE) is an NAD(+) binding site. Valine 180 lines the K(+) pocket. 229–232 (GVET) provides a ligand contact to NAD(+). Position 245 (leucine 245) interacts with K(+). Catalysis depends on glutamate 251, which acts as the Proton acceptor. Residues glycine 253, cysteine 285, and glutamate 386 each contribute to the NAD(+) site. Residue cysteine 285 is the Nucleophile of the active site. Cysteine 285 carries the cysteine sulfenic acid (-SOH) modification. The K(+) site is built by lysine 456 and glycine 459. The active-site Charge relay system is glutamate 463.

This sequence belongs to the aldehyde dehydrogenase family. Dimer of dimers. K(+) serves as cofactor.

The catalysed reaction is betaine aldehyde + NAD(+) + H2O = glycine betaine + NADH + 2 H(+). The protein operates within amine and polyamine biosynthesis; betaine biosynthesis via choline pathway; betaine from betaine aldehyde: step 1/1. Functionally, involved in the biosynthesis of the osmoprotectant glycine betaine. Catalyzes the irreversible oxidation of betaine aldehyde to the corresponding acid. In Burkholderia pseudomallei (strain K96243), this protein is Betaine aldehyde dehydrogenase.